Reading from the N-terminus, the 362-residue chain is Phosphoserine aminotransferase (362 aa).

Positions 9 and 42 each coordinate L-glutamate. Residues 76–77, tryptophan 102, threonine 153, aspartate 174, and glutamine 197 contribute to the pyridoxal 5'-phosphate site; that span reads GR. At lysine 198 the chain carries N6-(pyridoxal phosphate)lysine. Residue 239-240 coordinates pyridoxal 5'-phosphate; sequence NT.

The protein belongs to the class-V pyridoxal-phosphate-dependent aminotransferase family. SerC subfamily. As to quaternary structure, homodimer. It depends on pyridoxal 5'-phosphate as a cofactor.

Its subcellular location is the cytoplasm. The enzyme catalyses O-phospho-L-serine + 2-oxoglutarate = 3-phosphooxypyruvate + L-glutamate. The catalysed reaction is 4-(phosphooxy)-L-threonine + 2-oxoglutarate = (R)-3-hydroxy-2-oxo-4-phosphooxybutanoate + L-glutamate. It participates in amino-acid biosynthesis; L-serine biosynthesis; L-serine from 3-phospho-D-glycerate: step 2/3. It functions in the pathway cofactor biosynthesis; pyridoxine 5'-phosphate biosynthesis; pyridoxine 5'-phosphate from D-erythrose 4-phosphate: step 3/5. Catalyzes the reversible conversion of 3-phosphohydroxypyruvate to phosphoserine and of 3-hydroxy-2-oxo-4-phosphonooxybutanoate to phosphohydroxythreonine. The chain is Phosphoserine aminotransferase from Escherichia coli O157:H7.